The chain runs to 295 residues: sn-glycerol-3-phosphate transport system permease protein UgpA (295 aa).

Residues 1 to 11 (MSSSRPVFRSR) are Cytoplasmic-facing. The helical transmembrane segment at 12–32 (WLPYLLVAPQLIITVIFFIWP) threads the bilayer. Topologically, residues 33–80 (AGEALWYSLQSVDPFGFSSQFVGLDNFVTLFHDSYYLDAFWTTIKFST) are periplasmic. The ABC transmembrane type-1 domain maps to 76 to 284 (IKFSTFVTVS…FLVIVLTVVQ (209 aa)). A helical membrane pass occupies residues 81–101 (FVTVSGLLVSLFFAALVEYIV). Topologically, residues 102-109 (RGSRFYQT) are cytoplasmic. Residues 110-130 (LMLLPYAVAPAVAAVLWIFLF) form a helical membrane-spanning segment. The Periplasmic segment spans residues 131-156 (NPGRGLITHFLAEFGYDWNHAQNSGQ). A helical transmembrane segment spans residues 157 to 177 (AMFLVVFASVWKQISYNFLFF). Topologically, residues 178 to 207 (YAALQSIPRSLIEAAAIDGAGPIRRFFKIA) are cytoplasmic. A helical membrane pass occupies residues 208-228 (LPLIAPVSFFLLVVNLVYAFF). At 229-262 (DTFPVIDAATSGGPVQATTTLIYKIYREGFTGLD) the chain is on the periplasmic side. The chain crosses the membrane as a helical span at residues 263–283 (LASSAAQSVVLMFLVIVLTVV). Residues 284–295 (QFRYVEGKVRYQ) are Cytoplasmic-facing.

This sequence belongs to the binding-protein-dependent transport system permease family. UgpAE subfamily. In terms of assembly, the complex is composed of two ATP-binding proteins (UgpC), two transmembrane proteins (UgpA and UgpE) and a solute-binding protein (UgpB).

It is found in the cell inner membrane. Functionally, part of the ABC transporter complex UgpBAEC involved in sn-glycerol-3-phosphate (G3P) import. Probably responsible for the translocation of the substrate across the membrane. The sequence is that of sn-glycerol-3-phosphate transport system permease protein UgpA (ugpA) from Escherichia coli O6:K15:H31 (strain 536 / UPEC).